The following is a 366-amino-acid chain: MWNATPSEEPGSNLTRAELGWDAPPGNDSLADELLQLFPAPLLAGVTATCVALFVVGIAGNLLTMLVVSRFRELRTTTNLYLSSMAFSDLLIFLCMPLDLVRLWQYRPWNFGDLLCKLFQFVSESCTYATVLTITALSVERYFAICFPLRAKVVVTKGRVKLVILVIWALAFCSAGPIFVLVGVEHENGTDPQDTNECRATEFAVRSGLLTIMVWVSSVFFFLPVFCLTVLYSLIGRKLWRRKRGDGAVGSSLRDQNHRQTVKMLAVVVFAFILCWLPFHVGRYLFSKSFEPGSLEIAQISQYCNLVSFVLFYLSAAINPILYNIMSKKYRVAVFKLLGFEPFSQRKLSTLKDESSRAWTKSSINT.

Over 1–40 (MWNATPSEEPGSNLTRAELGWDAPPGNDSLADELLQLFPA) the chain is Extracellular. N-linked (GlcNAc...) asparagine glycosylation is found at asparagine 13 and asparagine 27. A helical transmembrane segment spans residues 41 to 66 (PLLAGVTATCVALFVVGIAGNLLTML). Residues 67–72 (VVSRFR) are Cytoplasmic-facing. A helical transmembrane segment spans residues 73-96 (ELRTTTNLYLSSMAFSDLLIFLCM). Topologically, residues 97–117 (PLDLVRLWQYRPWNFGDLLCK) are extracellular. The cysteines at positions 116 and 198 are disulfide-linked. The helical transmembrane segment at 118–139 (LFQFVSESCTYATVLTITALSV) threads the bilayer. The Cytoplasmic segment spans residues 140–162 (ERYFAICFPLRAKVVVTKGRVKL). A helical membrane pass occupies residues 163–183 (VILVIWALAFCSAGPIFVLVG). Residues 184–211 (VEHENGTDPQDTNECRATEFAVRSGLLT) lie on the Extracellular side of the membrane. Asparagine 188 is a glycosylation site (N-linked (GlcNAc...) asparagine). A helical membrane pass occupies residues 212–235 (IMVWVSSVFFFLPVFCLTVLYSLI). Residues 236 to 263 (GRKLWRRKRGDGAVGSSLRDQNHRQTVK) lie on the Cytoplasmic side of the membrane. Residues 264–285 (MLAVVVFAFILCWLPFHVGRYL) traverse the membrane as a helical segment. Residues 286-302 (FSKSFEPGSLEIAQISQ) are Extracellular-facing. A helical transmembrane segment spans residues 303–326 (YCNLVSFVLFYLSAAINPILYNIM). Topologically, residues 327-366 (SKKYRVAVFKLLGFEPFSQRKLSTLKDESSRAWTKSSINT) are cytoplasmic.

Belongs to the G-protein coupled receptor 1 family.

Its subcellular location is the cell membrane. In terms of biological role, receptor for ghrelin, coupled to G-alpha-11 proteins. Stimulates growth hormone secretion. Also binds other growth hormone releasing peptides (GHRP) (e.g. Met-enkephalin and GHRP-6) as well as non-peptide, low molecular weight secretagogues (e.g. L-692,429, MK-0677, adenosine). This chain is Growth hormone secretagogue receptor type 1 (GHSR), found in Oryctolagus cuniculus (Rabbit).